Here is a 348-residue protein sequence, read N- to C-terminus: tRNA pseudouridine synthase D (348 aa).

F26 lines the substrate pocket. Residue D79 is the Nucleophile of the active site. Substrate is bound at residue N128. Residues 154–302 (GVPNYFGSQR…VDPARRALLL (149 aa)) enclose the TRUD domain. Position 328 (F328) interacts with substrate.

It belongs to the pseudouridine synthase TruD family.

It carries out the reaction uridine(13) in tRNA = pseudouridine(13) in tRNA. Its function is as follows. Responsible for synthesis of pseudouridine from uracil-13 in transfer RNAs. This Serratia proteamaculans (strain 568) protein is tRNA pseudouridine synthase D.